Consider the following 295-residue polypeptide: Thioredoxin-related transmembrane protein 2 (295 aa).

A signal peptide spans 1–48 (MAVLAPLIALVYSVPRLSRWLARPYCLLSALLSIAFLLVRKLPPICNG). The Extracellular portion of the chain corresponds to 49–102 (LPTQREDGNPCDFDWREVEILMFLSAIVMMKNRRSITVEQHVGNIFMFSKVANA). The helical transmembrane segment at 103-125 (ILFFRLDIRMGLLYLTLCIVFLM) threads the bilayer. The Thioredoxin domain occupies 114 to 269 (LLYLTLCIVF…LYQRAKKLSK (156 aa)). Over 126 to 295 (TCKPPLYMGP…VPDGENKKDK (170 aa)) the chain is Cytoplasmic. Residues S211 and S243 each carry the phosphoserine modification. Residues 266–295 (KLSKGGDMSEEKPGNPTPTAVPDGENKKDK) form a disordered region. The Di-lysine motif signature appears at 292 to 295 (KKDK).

Monomer. Homodimer; disulfide-linked. Occurs in both reduced and oxidized monomeric form. Oxidative conditions increase homodimerization. Interacts with CANX. Interacts with ATP2A2.

It localises to the endoplasmic reticulum membrane. The protein resides in the mitochondrion membrane. Functionally, endoplasmic reticulum and mitochondria-associated protein that probably functions as a regulator of cellular redox state and thereby regulates protein post-translational modification, protein folding and mitochondrial activity. Indirectly regulates neuronal proliferation, migration, and organization in the developing brain. This Rattus norvegicus (Rat) protein is Thioredoxin-related transmembrane protein 2 (Tmx2).